An 81-amino-acid chain; its full sequence is Translational regulator CsrA (81 aa).

The protein belongs to the CsrA/RsmA family. As to quaternary structure, homodimer; the beta-strands of each monomer intercalate to form a hydrophobic core, while the alpha-helices form wings that extend away from the core.

Its subcellular location is the cytoplasm. In terms of biological role, a translational regulator that binds mRNA to regulate translation initiation and/or mRNA stability. Usually binds in the 5'-UTR at or near the Shine-Dalgarno sequence preventing ribosome-binding, thus repressing translation. Its main target seems to be the major flagellin gene, while its function is anatagonized by FliW. This chain is Translational regulator CsrA, found in Borreliella burgdorferi (strain ATCC 35210 / DSM 4680 / CIP 102532 / B31) (Borrelia burgdorferi).